A 221-amino-acid polypeptide reads, in one-letter code: Arginine ABC transporter permease protein ArtQ (221 aa).

In terms of domain architecture, ABC transmembrane type-1 spans 13-206 (ALMTLGLAVC…AVTLISQVGI (194 aa)). 5 consecutive transmembrane segments (helical) span residues 17–37 (LGLAVCSLLLGLFLSLIFAVL), 49–69 (VFVALLRGLPEIIVVLLVYFG), 82–102 (IEFGAFGCGVLALSLIFAAYA), 121–141 (GAALGLSKSYTFIHIVMPQVW), and 186–206 (TWYGIAALIYLAVTLISQVGI).

Belongs to the binding-protein-dependent transport system permease family. HisMQ subfamily. As to quaternary structure, the complex is composed of two ATP-binding proteins (ArtP), two transmembrane proteins (ArtM and ArtQ) and a solute-binding protein (ArtI).

The protein localises to the cell inner membrane. Functionally, part of the ABC transporter complex ArtPIQM involved in arginine transport. Probably responsible for the translocation of the substrate across the membrane. The polypeptide is Arginine ABC transporter permease protein ArtQ (artQ) (Haemophilus influenzae (strain ATCC 51907 / DSM 11121 / KW20 / Rd)).